Reading from the N-terminus, the 1040-residue chain is Chromatin modification-related protein rik1 (1040 aa).

It belongs to the DDB1 family. In terms of assembly, component of the Clr4 methyltransferase complex (ClrC) composed of at least clr4, rik1, pcu4, rbx1, raf1 and raf2. The cullin pcu4, rik1, raf1, raf2 and the ring-box protein rbx1 are components of an E3 ubiquitin ligase, whose activity is essential for heterochromatin assembly.

It localises to the nucleus. It is found in the cytoplasm. The protein resides in the cytoskeleton. Its subcellular location is the microtubule organizing center. The protein localises to the spindle pole body. It localises to the chromosome. Functionally, component of the Clr4 methyltransferase complex (ClrC) which contributes to the establishment of heterochromatin by specifically methylating histone H3 to form H3K9me. ClrC preferentially ubiquitylates H3K14 and ClrC-mediated H3 ubiquitination promotes clr4 methyltransferase activity for the methylation of H3K9. H3K9me represents a specific tag for epigenetic transcriptional repression by recruiting swi6/HP1 to methylated histones which leads to transcriptional silencing within centromeric heterochromatin, telomeric regions and at the silent mating-type loci. Rik1 is involved in the RNAi-mediated targeting of ClrC to heterochromatic repeat elements. Rik1 also has a function in meiotic telomere clustering. This is Chromatin modification-related protein rik1 (rik1) from Schizosaccharomyces pombe (strain 972 / ATCC 24843) (Fission yeast).